The primary structure comprises 1155 residues: MGLRFVLGRSGSGKSTYILDEIKKEAQKNETTSIILLVPEQYTFEAENRVSKLFLGKEKDKYLRVRVLSFKTLSNIVFSQVGGLTDVNINSSGKAMMVYRAIEDVSEELNVFSKSKSQSGFVSSITDMISEMKQYNISPEMLENISGELDNETLSLKLKDISKIYNSFEGKLHENYVDAQDMLTSLTSKIELSSYLDGACVYIDEFTGFTPNQYNVIKSILNKSKSVNISLTVDDINYIGYSKSDMFSRTKFTYSKLTQLCNEEGIKILPQVNLNTGVIKRFEKVKELQHLERFYNAYPYKIYSNPTENIKIKEFNNLYSEVEEIAREIVHLVRDKNVRYRDITIATRDLNRYDFLVHSIFNEYNIPNFIDKKREAKSNPIVILIISALEMKNRRYGYETMFRYLKSGLIGIDNDDINLLENYVLANGIKGKKWFDEKWDYRITQSLSGQESEFELELKEKINEIKNRVLEPIVILQEKLRGKNRVKEICRYIYEFLLDINMPETIESLIVNFKDKGELDVANQYSQVWDIVVDILDQMVELMGDEIISLEKFIKLITLGFDEYELGLVPPSIDQVLVSSVDRMKNPDTKYLYLVGTTDGVFPLITKDSGILSDNDRESLGNKGIEVDIDSKTRSFEEQFLVYKALTSTSKNLTITYPISDHEGKTLRPSIIISRLKKIFPNIENKSYLVEENKNTDKDILKKITVKSPTFNELINVIKNYDSDGYNTEEINSIWLDIYRYYLKDEIYSSITKKVIKGLSYTNQVHKIEEKKIRSLYKSNSLSISRLEKYAECPFAYFIQYGLKAKKRKEYSFTPPDLGTFIHNILDRFSKELLQDNLTWRDIDEKYIELKIGIIVDEIILKIPGYILNSSERYKYLAYRLKNMLTTAITIISQQIKQGSFEPIDYEVKFGDNGKYPPIKMVLENGQEVSLIGQIDRVDEFEEGENKYIRIIDYKSGNKSISLTEIYYGLQLQLLVYLDAILESAKDEDMNINPAAILYCRINNPIAKFNEDKDDEEIQEAILKELRMKGLVVKDSHIVKEMDKSLIDGERKNSLVIPVGLTKDGNVGKSTSAISYEDFKLLRKYVRHAIKDLCEEMLSGEIRIAPYKHKDGTSCDFCDYSAICQFDSTIKDNKYKNLNNKSNEEIIKMMKGDVN.

8–15 is an ATP binding site; the sequence is GRSGSGKS. 4 residues coordinate [4Fe-4S] cluster: Cys793, Cys1115, Cys1118, and Cys1124.

This sequence belongs to the helicase family. AddB/RexB type 1 subfamily. In terms of assembly, heterodimer of AddA and AddB. Requires Mg(2+) as cofactor. It depends on [4Fe-4S] cluster as a cofactor.

Its function is as follows. The heterodimer acts as both an ATP-dependent DNA helicase and an ATP-dependent, dual-direction single-stranded exonuclease. Recognizes the chi site generating a DNA molecule suitable for the initiation of homologous recombination. The AddB subunit has 5' -&gt; 3' nuclease activity but not helicase activity. In Clostridioides difficile (strain 630) (Peptoclostridium difficile), this protein is ATP-dependent helicase/deoxyribonuclease subunit B.